The sequence spans 465 residues: Cysteine--tRNA ligase (465 aa).

C27 contacts Zn(2+). Positions 29–39 match the 'HIGH' region motif; sequence PTVYNFFHIGN. The Zn(2+) site is built by C207, H232, and E236. Residues 264 to 268 carry the 'KMSKS' region motif; sequence KMSKS. K267 is an ATP binding site.

This sequence belongs to the class-I aminoacyl-tRNA synthetase family. As to quaternary structure, monomer. Requires Zn(2+) as cofactor.

The protein localises to the cytoplasm. It carries out the reaction tRNA(Cys) + L-cysteine + ATP = L-cysteinyl-tRNA(Cys) + AMP + diphosphate. This Clostridium kluyveri (strain NBRC 12016) protein is Cysteine--tRNA ligase.